The primary structure comprises 117 residues: MDKKSARIRRATRARRKLKELGATRLVVHRSPRHMYAQVIAPNGSEVLVAASTLEKAITEQLKYSGNKDAAAAVGKALAERALEKGIAKVSFARSGFQYHGRVQALADAAREAGLQF.

It belongs to the universal ribosomal protein uL18 family. As to quaternary structure, part of the 50S ribosomal subunit; part of the 5S rRNA/L5/L18/L25 subcomplex. Contacts the 5S and 23S rRNAs.

Functionally, this is one of the proteins that bind and probably mediate the attachment of the 5S RNA into the large ribosomal subunit, where it forms part of the central protuberance. The polypeptide is Large ribosomal subunit protein uL18 (Buchnera aphidicola subsp. Acyrthosiphon kondoi (Acyrthosiphon kondoi symbiotic bacterium)).